The following is a 25-amino-acid chain: Caerin-1.5 (25 aa).

Leu25 carries the post-translational modification Leucine amide.

Expressed by the skin parotoid and/or rostral glands.

The protein resides in the secreted. Antibacterial peptide, that adopts an alpha helical conformation which can disrupt bacterial membranes. Each caerin displays a different antimicrobial specificity. This chain is Caerin-1.5, found in Ranoidea caerulea (Green tree frog).